A 152-amino-acid chain; its full sequence is UPF0756 membrane protein PEPE_1090 (152 aa).

4 helical membrane-spanning segments follow: residues 4–24, 52–72, 85–105, and 115–135; these read WLFLIGIFIVALLGKNQSLII, WGVTIISITILVPIATGKIGF, WIAVACGILVSLLSYQGVGFL, and LVMGTIIGVVFMNGIAAGPII.

This sequence belongs to the UPF0756 family.

It is found in the cell membrane. This Pediococcus pentosaceus (strain ATCC 25745 / CCUG 21536 / LMG 10740 / 183-1w) protein is UPF0756 membrane protein PEPE_1090.